The primary structure comprises 416 residues: Prostate tumor-overexpressed gene 1 protein (416 aa).

The tract at residues 1–53 (MVRPRRAPYRSGAGGPLGGRGRPPRPLVVRAVRSRSWPASPRGPQPPRIRARS) is disordered. A compositionally biased stretch (gly residues) spans 12–21 (GAGGPLGGRG). The span at 27–36 (LVVRAVRSRS) shows a compositional bias: low complexity. A Phosphoserine modification is found at serine 53. The interaction with FLOT1 stretch occupies residues 184–416 (NGFAGCMLFP…QEQQQRGMGG (233 aa)).

Belongs to the Mediator complex subunit 25 family. PTOV1 subfamily. May interact with CREBBP. Interacts with FLOT1. In terms of processing, ubiquitinated by the CRL2(KLHDC2) complex, which recognizes the diglycine (Gly-Gly) at the C-terminus, leading to its degradation. Ubiquitinated by the CRL2(APPBP2) complex, which recognizes the Arg-Xaa-Xaa-Gly sequence at the C-terminus, leading to its degradation. In terms of tissue distribution, expressed in brain, heart, kidney, liver, placenta, skeletal muscle and small intestine.

The protein resides in the cytoplasm. The protein localises to the nucleus. It localises to the cell membrane. Its subcellular location is the perinuclear region. Its function is as follows. May activate transcription. Required for nuclear translocation of FLOT1. Promotes cell proliferation. The protein is Prostate tumor-overexpressed gene 1 protein (PTOV1) of Homo sapiens (Human).